The following is a 270-amino-acid chain: Formamidopyrimidine-DNA glycosylase (270 aa).

Proline 2 acts as the Schiff-base intermediate with DNA in catalysis. Residue glutamate 3 is the Proton donor of the active site. The active-site Proton donor; for beta-elimination activity is the lysine 57. 3 residues coordinate DNA: histidine 90, arginine 109, and lysine 151. Residues 236–270 (RVYGRKGQACEVCESEIQSVTLGQRNTFFCEQCQK) form an FPG-type zinc finger. Arginine 260 serves as the catalytic Proton donor; for delta-elimination activity.

This sequence belongs to the FPG family. In terms of assembly, monomer. Requires Zn(2+) as cofactor.

The catalysed reaction is Hydrolysis of DNA containing ring-opened 7-methylguanine residues, releasing 2,6-diamino-4-hydroxy-5-(N-methyl)formamidopyrimidine.. It catalyses the reaction 2'-deoxyribonucleotide-(2'-deoxyribose 5'-phosphate)-2'-deoxyribonucleotide-DNA = a 3'-end 2'-deoxyribonucleotide-(2,3-dehydro-2,3-deoxyribose 5'-phosphate)-DNA + a 5'-end 5'-phospho-2'-deoxyribonucleoside-DNA + H(+). Functionally, involved in base excision repair of DNA damaged by oxidation or by mutagenic agents. Acts as a DNA glycosylase that recognizes and removes damaged bases. Has a preference for oxidized purines, such as 7,8-dihydro-8-oxoguanine (8-oxoG). Has AP (apurinic/apyrimidinic) lyase activity and introduces nicks in the DNA strand. Cleaves the DNA backbone by beta-delta elimination to generate a single-strand break at the site of the removed base with both 3'- and 5'-phosphates. This Pseudoalteromonas atlantica (strain T6c / ATCC BAA-1087) protein is Formamidopyrimidine-DNA glycosylase.